The following is a 372-amino-acid chain: Lipoyl synthase, mitochondrial (372 aa).

The N-terminal 27 residues, 1-27 (MSLRCGGAVRTVGPRVFGRYVFSPVRE), are a transit peptide targeting the mitochondrion. [4Fe-4S] cluster-binding residues include C106, C111, C117, C137, C141, C144, and S352. Residues 122–341 (EYATATATIM…EKVGNELGFH (220 aa)) enclose the Radical SAM core domain.

Belongs to the radical SAM superfamily. Lipoyl synthase family. It depends on [4Fe-4S] cluster as a cofactor.

It is found in the mitochondrion. It carries out the reaction [[Fe-S] cluster scaffold protein carrying a second [4Fe-4S](2+) cluster] + N(6)-octanoyl-L-lysyl-[protein] + 2 oxidized [2Fe-2S]-[ferredoxin] + 2 S-adenosyl-L-methionine + 4 H(+) = [[Fe-S] cluster scaffold protein] + N(6)-[(R)-dihydrolipoyl]-L-lysyl-[protein] + 4 Fe(3+) + 2 hydrogen sulfide + 2 5'-deoxyadenosine + 2 L-methionine + 2 reduced [2Fe-2S]-[ferredoxin]. The protein operates within protein modification; protein lipoylation via endogenous pathway; protein N(6)-(lipoyl)lysine from octanoyl-[acyl-carrier-protein]: step 2/2. Catalyzes the radical-mediated insertion of two sulfur atoms into the C-6 and C-8 positions of the octanoyl moiety bound to the lipoyl domains of lipoate-dependent enzymes, thereby converting the octanoylated domains into lipoylated derivatives. The polypeptide is Lipoyl synthase, mitochondrial (Bos taurus (Bovine)).